The primary structure comprises 244 residues: 1-(5-phosphoribosyl)-5-[(5-phosphoribosylamino)methylideneamino] imidazole-4-carboxamide isomerase (244 aa).

The active-site Proton acceptor is the aspartate 11. The Proton donor role is filled by aspartate 132.

The protein belongs to the HisA/HisF family.

The protein resides in the cytoplasm. It catalyses the reaction 1-(5-phospho-beta-D-ribosyl)-5-[(5-phospho-beta-D-ribosylamino)methylideneamino]imidazole-4-carboxamide = 5-[(5-phospho-1-deoxy-D-ribulos-1-ylimino)methylamino]-1-(5-phospho-beta-D-ribosyl)imidazole-4-carboxamide. It functions in the pathway amino-acid biosynthesis; L-histidine biosynthesis; L-histidine from 5-phospho-alpha-D-ribose 1-diphosphate: step 4/9. This is 1-(5-phosphoribosyl)-5-[(5-phosphoribosylamino)methylideneamino] imidazole-4-carboxamide isomerase from Sphingopyxis alaskensis (strain DSM 13593 / LMG 18877 / RB2256) (Sphingomonas alaskensis).